The following is a 491-amino-acid chain: NADH-ubiquinone oxidoreductase chain 2 (491 aa).

14 helical membrane passes run 11-31 (MIKY…SISI), 38-58 (VHII…VIGI), 74-94 (ELIK…IKMF), 106-126 (ITDE…ISME), 129-149 (NLIT…ILAL), 161-181 (LKYY…IVSI), 210-230 (IALI…HGWL), 238-258 (GMLM…MVLI), 270-290 (AIMF…VGTI), 298-318 (LIRF…LMLA), 330-350 (VYYL…IMGF), 375-395 (GAIV…MTNF), 411-433 (VYLT…NLVK), and 463-483 (IVLG…ILNV).

It belongs to the complex I subunit 2 family.

The protein resides in the mitochondrion inner membrane. It carries out the reaction a ubiquinone + NADH + 5 H(+)(in) = a ubiquinol + NAD(+) + 4 H(+)(out). In terms of biological role, core subunit of the mitochondrial membrane respiratory chain NADH dehydrogenase (Complex I) that is believed to belong to the minimal assembly required for catalysis. Complex I functions in the transfer of electrons from NADH to the respiratory chain. The immediate electron acceptor for the enzyme is believed to be ubiquinone. The sequence is that of NADH-ubiquinone oxidoreductase chain 2 (nad2) from Dictyostelium citrinum (Slime mold).